The chain runs to 219 residues: Mitochondrial fission factor homolog A (219 aa).

The Cytoplasmic portion of the chain corresponds to 1-199; that stretch reads MAEINRMQYE…ENKERVKHEM (199 aa). Residues 164 to 194 adopt a coiled-coil conformation; sequence DLALADAASLRRQIIKLNRRLLLLEEENKER. A helical; Anchor for type IV membrane protein membrane pass occupies residues 200-217; that stretch reads TMYSIIIIFGLLNSWLWL. Residues 218–219 lie on the Extracellular side of the membrane; sequence RR.

It belongs to the Tango11 family.

It localises to the mitochondrion outer membrane. The protein localises to the peroxisome. The protein resides in the cytoplasmic vesicle. Its subcellular location is the secretory vesicle. It is found in the synaptic vesicle. Functionally, plays a role in mitochondrial and peroxisomal fission. Promotes the recruitment and association of the fission mediator dynamin-related protein 1 (DNM1L) to the mitochondrial surface. This Xenopus laevis (African clawed frog) protein is Mitochondrial fission factor homolog A (mff-a).